We begin with the raw amino-acid sequence, 543 residues long: Periplasmic oligopeptide-binding protein OppA (543 aa).

An N-terminal signal peptide occupies residues 1–26 (MSNITKKSLIAAGILTALIAASAATA). A disulfide bridge links Cys-297 with Cys-443.

It belongs to the bacterial solute-binding protein 5 family. As to quaternary structure, the complex is composed of two ATP-binding proteins (OppD and OppF), two transmembrane proteins (OppB and OppC) and a solute-binding protein (OppA).

Its subcellular location is the periplasm. Functionally, part of the ABC transporter complex OppABCDF involved in the uptake of oligopeptides, including the cell wall murein tripeptide L-alanyl-gamma-D-glutamyl-meso-diaminopimelate. Plays an important nutritional role and is involved in the recycling of cell wall peptides. Binds peptides containing from two to five amino acid residues regardless of their sequence. Also binds cell wall peptides, such as L-alanyl-gamma-D-glutamyl-meso-diaminopimelate. In Salmonella typhimurium (strain LT2 / SGSC1412 / ATCC 700720), this protein is Periplasmic oligopeptide-binding protein OppA.